Consider the following 62-residue polypeptide: DNA-directed RNA polymerase subunit Rpo10 (62 aa).

4 residues coordinate Zn(2+): cysteine 6, cysteine 9, cysteine 43, and cysteine 44.

The protein belongs to the archaeal Rpo10/eukaryotic RPB10 RNA polymerase subunit family. Part of the RNA polymerase complex. Requires Zn(2+) as cofactor.

The protein resides in the cytoplasm. The enzyme catalyses RNA(n) + a ribonucleoside 5'-triphosphate = RNA(n+1) + diphosphate. Its function is as follows. DNA-dependent RNA polymerase (RNAP) catalyzes the transcription of DNA into RNA using the four ribonucleoside triphosphates as substrates. The protein is DNA-directed RNA polymerase subunit Rpo10 of Methanococcoides burtonii (strain DSM 6242 / NBRC 107633 / OCM 468 / ACE-M).